The sequence spans 178 residues: Large ribosomal subunit protein uL6 (178 aa).

The protein belongs to the universal ribosomal protein uL6 family. In terms of assembly, part of the 50S ribosomal subunit.

Functionally, this protein binds to the 23S rRNA, and is important in its secondary structure. It is located near the subunit interface in the base of the L7/L12 stalk, and near the tRNA binding site of the peptidyltransferase center. This Arthrobacter sp. (strain FB24) protein is Large ribosomal subunit protein uL6.